A 167-amino-acid chain; its full sequence is Putative N-acetylgalactosamine-6-phosphate deacetylase (167 aa).

The protein belongs to the metallo-dependent hydrolases superfamily. NagA family.

The enzyme catalyses N-acetyl-D-galactosamine 6-phosphate + H2O = D-galactosamine 6-phosphate + acetate. The sequence is that of Putative N-acetylgalactosamine-6-phosphate deacetylase (agaA) from Escherichia coli (strain K12).